Here is a 154-residue protein sequence, read N- to C-terminus: Ecotin-like protein 2 (154 aa).

This sequence belongs to the protease inhibitor I11 (ecotin) family.

In Leishmania braziliensis, this protein is Ecotin-like protein 2.